Consider the following 372-residue polypeptide: Aminomethyltransferase (372 aa).

This sequence belongs to the GcvT family. In terms of assembly, the glycine cleavage system is composed of four proteins: P, T, L and H.

The enzyme catalyses N(6)-[(R)-S(8)-aminomethyldihydrolipoyl]-L-lysyl-[protein] + (6S)-5,6,7,8-tetrahydrofolate = N(6)-[(R)-dihydrolipoyl]-L-lysyl-[protein] + (6R)-5,10-methylene-5,6,7,8-tetrahydrofolate + NH4(+). Its function is as follows. The glycine cleavage system catalyzes the degradation of glycine. In Burkholderia ambifaria (strain MC40-6), this protein is Aminomethyltransferase.